Here is a 212-residue protein sequence, read N- to C-terminus: MDPSGPGPSSAAAGGAPAVAAAPQPPAQLSRYESQKRRDWNTFLQYLRNHRPPLTLARCSGAHVIEFLRYLDQFGKTKVHASGCAFYGQPSPPGPCPCPLRQAWGSLDALIGRLRAAYEESGGTPESNPFAARAVRIYLREVRDSQAKARGIPYEKKKRKRSQAAQPAGVEPSGSSSAAAAAAGGGDTGSGGGAAATTTAQPGGSGTAPSAS.

Residues 1-22 (MDPSGPGPSSAAAGGAPAVAAA) are compositionally biased toward low complexity. Disordered regions lie at residues 1 to 34 (MDPSGPGPSSAAAGGAPAVAAAPQPPAQLSRYES) and 148 to 212 (KARG…PSAS). Positions 31–158 (RYESQKRRDW…ARGIPYEKKK (128 aa)) constitute an ALOG domain. Residues 156–160 (KKKRK) carry the Nuclear localization signal motif. Residues 173–182 (SGSSSAAAAA) are compositionally biased toward low complexity. Positions 183–194 (AGGGDTGSGGGA) are enriched in gly residues.

Belongs to the plant homeotic and developmental regulators ALOG protein family.

The protein localises to the nucleus. Functionally, probable transcription regulator that acts as a developmental regulator by promoting cell growth in response to light. The chain is Protein G1-like7 from Oryza sativa subsp. indica (Rice).